A 302-amino-acid chain; its full sequence is Phosphoribosylaminoimidazole-succinocarboxamide synthase (302 aa).

Belongs to the SAICAR synthetase family.

The catalysed reaction is 5-amino-1-(5-phospho-D-ribosyl)imidazole-4-carboxylate + L-aspartate + ATP = (2S)-2-[5-amino-1-(5-phospho-beta-D-ribosyl)imidazole-4-carboxamido]succinate + ADP + phosphate + 2 H(+). Its pathway is purine metabolism; IMP biosynthesis via de novo pathway; 5-amino-1-(5-phospho-D-ribosyl)imidazole-4-carboxamide from 5-amino-1-(5-phospho-D-ribosyl)imidazole-4-carboxylate: step 1/2. This chain is Phosphoribosylaminoimidazole-succinocarboxamide synthase, found in Cupriavidus taiwanensis (strain DSM 17343 / BCRC 17206 / CCUG 44338 / CIP 107171 / LMG 19424 / R1) (Ralstonia taiwanensis (strain LMG 19424)).